A 372-amino-acid chain; its full sequence is UDP-N-acetylglucosamine--N-acetylmuramyl-(pentapeptide) pyrophosphoryl-undecaprenol N-acetylglucosamine transferase (372 aa).

UDP-N-acetyl-alpha-D-glucosamine-binding positions include 15-17 (TGG), asparagine 126, arginine 169, serine 197, and glutamine 299.

It belongs to the glycosyltransferase 28 family. MurG subfamily.

It is found in the cell inner membrane. It catalyses the reaction di-trans,octa-cis-undecaprenyl diphospho-N-acetyl-alpha-D-muramoyl-L-alanyl-D-glutamyl-meso-2,6-diaminopimeloyl-D-alanyl-D-alanine + UDP-N-acetyl-alpha-D-glucosamine = di-trans,octa-cis-undecaprenyl diphospho-[N-acetyl-alpha-D-glucosaminyl-(1-&gt;4)]-N-acetyl-alpha-D-muramoyl-L-alanyl-D-glutamyl-meso-2,6-diaminopimeloyl-D-alanyl-D-alanine + UDP + H(+). It functions in the pathway cell wall biogenesis; peptidoglycan biosynthesis. Cell wall formation. Catalyzes the transfer of a GlcNAc subunit on undecaprenyl-pyrophosphoryl-MurNAc-pentapeptide (lipid intermediate I) to form undecaprenyl-pyrophosphoryl-MurNAc-(pentapeptide)GlcNAc (lipid intermediate II). The sequence is that of UDP-N-acetylglucosamine--N-acetylmuramyl-(pentapeptide) pyrophosphoryl-undecaprenol N-acetylglucosamine transferase from Methylobacterium sp. (strain 4-46).